The primary structure comprises 297 residues: Succinate dehydrogenase [ubiquinone] iron-sulfur subunit, mitochondrial (297 aa).

The 94-residue stretch at 47–140 (KKFEIYRWNP…SLKVYPLPHM (94 aa)) folds into the 2Fe-2S ferredoxin-type domain. Positions 100, 105, 108, and 120 each coordinate [2Fe-2S] cluster. The 4Fe-4S ferredoxin-type domain occupies 185 to 215 (DRSKLDGLYECILCACCSTSCPSYWWNAEKY). [4Fe-4S] cluster is bound by residues Cys195, Cys198, and Cys201. Cys205 serves as a coordination point for [3Fe-4S] cluster. Trp210 lines the a ubiquinone pocket. Residues Cys252 and Cys258 each coordinate [3Fe-4S] cluster. A [4Fe-4S] cluster-binding site is contributed by Cys262.

The protein belongs to the succinate dehydrogenase/fumarate reductase iron-sulfur protein family. In terms of assembly, component of complex II composed of four subunits: a flavoprotein (FP), an iron-sulfur protein (IP), and a cytochrome b composed of a large and a small subunit. It depends on [2Fe-2S] cluster as a cofactor. [3Fe-4S] cluster serves as cofactor. The cofactor is [4Fe-4S] cluster. In terms of tissue distribution, most abundant in the adult thorax and low in abdominal tissues.

Its subcellular location is the mitochondrion inner membrane. The enzyme catalyses a quinone + succinate = fumarate + a quinol. The protein operates within carbohydrate metabolism; tricarboxylic acid cycle; fumarate from succinate (eukaryal route): step 1/1. In terms of biological role, iron-sulfur protein (IP) subunit of succinate dehydrogenase (SDH) that is involved in complex II of the mitochondrial electron transport chain and is responsible for transferring electrons from succinate to ubiquinone (coenzyme Q). The sequence is that of Succinate dehydrogenase [ubiquinone] iron-sulfur subunit, mitochondrial (SdhB) from Drosophila melanogaster (Fruit fly).